Here is a 186-residue protein sequence, read N- to C-terminus: ADP-ribosylation factor-like protein 8 (186 aa).

Positions 1-19 form an intramembrane region, note=Mediates targeting to membranes; that stretch reads MLALINRILEWFKSIFWKE. GTP-binding positions include 29–35, 71–75, and 130–133; these read QFSGKTT, DIGGQ, and NKRD.

This sequence belongs to the small GTPase superfamily. Arf family. In terms of assembly, interacts with tubulin. Interacts (in GTP-bound form) with Rilpl. Interacts with unc-104. As to expression, expressed throughout development, from embryo to adult stage, in different tissues such as larval motor neurons, salivary glands, testis and ovaries (at protein level).

It localises to the lysosome membrane. The protein localises to the synapse. The protein resides in the cell projection. It is found in the axon. Its subcellular location is the perikaryon. Required for normal functioning of the late endocytic pathway including lysosome motility and late endosome-lysosome fusion. Not required for the delivery of lysosomal membrane protein-containing vesicles to late endosomes. In larval motor neurons, mediates the anterograde axonal long-range transport of presynaptic lysosome-related vesicles required for presynaptic biogenesis and synaptic function. Acts downstream of Rab2 during presynaptic precursor vesicle biogenesis. Essential role in chromosome segregation. The sequence is that of ADP-ribosylation factor-like protein 8 from Drosophila melanogaster (Fruit fly).